The sequence spans 201 residues: Large ribosomal subunit protein uL4 (201 aa).

Residues 44 to 71 (RAQKTRAEVTGSGKKPWRQKGTGRARSG) are disordered.

Belongs to the universal ribosomal protein uL4 family. In terms of assembly, part of the 50S ribosomal subunit.

One of the primary rRNA binding proteins, this protein initially binds near the 5'-end of the 23S rRNA. It is important during the early stages of 50S assembly. It makes multiple contacts with different domains of the 23S rRNA in the assembled 50S subunit and ribosome. Its function is as follows. Forms part of the polypeptide exit tunnel. The protein is Large ribosomal subunit protein uL4 of Enterobacter sp. (strain 638).